The primary structure comprises 424 residues: Tyrosine--tRNA ligase (424 aa).

Tyr-37 provides a ligand contact to L-tyrosine. Positions 42–51 (PTADSLHLGH) match the 'HIGH' region motif. The L-tyrosine site is built by Tyr-174 and Gln-178. Residues 234-238 (KFGKT) carry the 'KMSKS' region motif. Lys-237 is an ATP binding site. Positions 357 to 414 (TGLIDALVASGLAKSKSEARTFIQSGSVAINGNKAEALDHAIGGDELLYGRFTILRRG) constitute an S4 RNA-binding domain.

Belongs to the class-I aminoacyl-tRNA synthetase family. TyrS type 1 subfamily. In terms of assembly, homodimer.

The protein localises to the cytoplasm. It carries out the reaction tRNA(Tyr) + L-tyrosine + ATP = L-tyrosyl-tRNA(Tyr) + AMP + diphosphate + H(+). Catalyzes the attachment of tyrosine to tRNA(Tyr) in a two-step reaction: tyrosine is first activated by ATP to form Tyr-AMP and then transferred to the acceptor end of tRNA(Tyr). The polypeptide is Tyrosine--tRNA ligase (Dechloromonas aromatica (strain RCB)).